Reading from the N-terminus, the 315-residue chain is Homoserine kinase (315 aa).

97 to 107 (PPARGLGSSAT) is an ATP binding site.

It belongs to the GHMP kinase family. Homoserine kinase subfamily.

It is found in the cytoplasm. The catalysed reaction is L-homoserine + ATP = O-phospho-L-homoserine + ADP + H(+). The protein operates within amino-acid biosynthesis; L-threonine biosynthesis; L-threonine from L-aspartate: step 4/5. In terms of biological role, catalyzes the ATP-dependent phosphorylation of L-homoserine to L-homoserine phosphate. The polypeptide is Homoserine kinase (Synechococcus sp. (strain WH7803)).